The chain runs to 207 residues: Protein dct-5 (207 aa).

Residues 13–33 traverse the membrane as a helical segment; sequence LNFILSIMNSYLFVLIVSIGF.

The protein resides in the membrane. Acts downstream of daf-16/foxo to suppress tumors induced by disruption of gld-1. Potentially a direct target of daf-15/foxo. The protein is Protein dct-5 (dct-5) of Caenorhabditis elegans.